A 236-amino-acid polypeptide reads, in one-letter code: 2,3,4,5-tetrahydropyridine-2,6-dicarboxylate N-acetyltransferase (236 aa).

This sequence belongs to the transferase hexapeptide repeat family. DapH subfamily.

The catalysed reaction is (S)-2,3,4,5-tetrahydrodipicolinate + acetyl-CoA + H2O = L-2-acetamido-6-oxoheptanedioate + CoA. Its pathway is amino-acid biosynthesis; L-lysine biosynthesis via DAP pathway; LL-2,6-diaminopimelate from (S)-tetrahydrodipicolinate (acetylase route): step 1/3. Catalyzes the transfer of an acetyl group from acetyl-CoA to tetrahydrodipicolinate. This is 2,3,4,5-tetrahydropyridine-2,6-dicarboxylate N-acetyltransferase from Limosilactobacillus reuteri (strain DSM 20016) (Lactobacillus reuteri).